Reading from the N-terminus, the 321-residue chain is 37 kDa cell surface protein (321 aa).

The protein resides in the secreted. The protein localises to the cell wall. This is 37 kDa cell surface protein (CSP37) from Candida albicans (Yeast).